Consider the following 570-residue polypeptide: Urease subunit alpha (570 aa).

Residues 131-570 (GGMDSHIHFI…LPMAQRYFLF (440 aa)) form the Urease domain. Ni(2+)-binding residues include histidine 136, histidine 138, and lysine 219. N6-carboxylysine is present on lysine 219. Histidine 221 is a substrate binding site. Ni(2+)-binding residues include histidine 248 and histidine 274. The Proton donor role is filled by histidine 322. Aspartate 362 lines the Ni(2+) pocket.

Belongs to the metallo-dependent hydrolases superfamily. Urease alpha subunit family. In terms of assembly, heterotrimer of UreA (gamma), UreB (beta) and UreC (alpha) subunits. Three heterotrimers associate to form the active enzyme. It depends on Ni cation as a cofactor. Post-translationally, carboxylation allows a single lysine to coordinate two nickel ions.

The protein resides in the cytoplasm. The enzyme catalyses urea + 2 H2O + H(+) = hydrogencarbonate + 2 NH4(+). Its pathway is nitrogen metabolism; urea degradation; CO(2) and NH(3) from urea (urease route): step 1/1. The polypeptide is Urease subunit alpha (Rhizobium etli (strain ATCC 51251 / DSM 11541 / JCM 21823 / NBRC 15573 / CFN 42)).